The following is a 669-amino-acid chain: Hypoxia-inducible factor 3-alpha (669 aa).

The interval 1 to 27 (MALGLQRARSTTELRKEKSRDAARSRR) is disordered. Over residues 10–27 (STTELRKEKSRDAARSRR) the composition is skewed to basic and acidic residues. In terms of domain architecture, bHLH spans 14–67 (LRKEKSRDAARSRRSQETEVLYQLAHTLPFARGVSAHLDKASIMRLTISYLRMH). Residues 77-100 (QVGAGGEPLDACYLKALEGFVMVL) are nuclear localization signal. PAS domains are found at residues 82–154 (GEPL…LSRR) and 227–297 (PHPG…LSKG). The segment at 230–274 (GSLEPPLGRGAFLSRHSLDMKFTYCDDRIAEVAGYSPDDLIGCSA) is nuclear export signal. Residues 354–389 (EQTEQHSRRPIQRGAPSQKDTPNPGDSLDTPGPRIL) form a disordered region. An LRRLL motif is present at residues 414 to 418 (LRRLL). Residues 430–444 (TPSTPLATRHPQSPL) show a composition bias toward polar residues. The interval 430-451 (TPSTPLATRHPQSPLSADLPDE) is disordered. An ODD region spans residues 452–581 (LPVGTENVHR…TLAQSSEDED (130 aa)). Residues 454–506 (VGTENVHRLFTSGKDTEAVETDLDIAQDADALDLEMLAPYISMDDDFQLNASE) are NTAD. Lysine 467 participates in a covalent cross-link: Glycyl lysine isopeptide (Lys-Gly) (interchain with G-Cter in ubiquitin). Positions 490-497 (LAPYISMD) match the LAPYISMD motif. Position 492 is a 4-hydroxyproline (proline 492). 2 disordered regions span residues 523–600 (RARS…SPEH) and 619–669 (APGS…AQAD). Low complexity-rich tracts occupy residues 530 to 541 (LSPPALEPSLLP) and 550 to 564 (SCSSPSRGDPSASSP). Residue lysine 570 forms a Glycyl lysine isopeptide (Lys-Gly) (interchain with G-Cter in ubiquitin) linkage. Residues 629–646 (PLLNLNEPLGLGPSLLSP) are compositionally biased toward low complexity.

Isoform 2 interacts (via ODD domain) with VHL (via beta domain). Isoform 4 interacts with HIF1A; the interaction inhibits the binding of HIF1A to hypoxia-responsive element (HRE) and HIF1A/ARNT-dependent transcriptional activation. Isoform 4 interacts with ARNT; the interaction occurs in a HIF1A- and DNA-binding-independent manner and does not induce HIF1A/ARNT-dependent transcriptional activation. Isoform 4 interacts with EPAS1. Interacts with BAD, BCL2L2 and MCL1. In terms of processing, in normoxia, hydroxylated on Pro-492 in the oxygen-dependent degradation domain (ODD) by prolyl hydroxylase(s) (PHD). The hydroxylated proline promotes interaction with VHL, initiating rapid ubiquitination and subsequent proteasomal degradation. Ubiquitinated; ubiquitination occurs in a VHL- and oxygen-dependent pathway and subsequently targeted for proteasomal degradation. As to expression, expressed in vascular cells (at protein level). Expressed in kidney. Expressed in lung epithelial cells. Expressed in endothelial cells (venous and arterial cells from umbilical cord and aortic endothelial cells) and in vascular smooth muscle cells (aorta). Strongly expressed in the heart, placenta, and skeletal muscle, whereas a weak expression profile was found in the lung, liver, and kidney. Expressed weakly in cell renal cell carcinoma (CC-RCC) compared to normal renal cells. Expression is down-regulated in numerous kidney tumor cells compared to non tumor kidney tissues. Isoform 2 is expressed in heart, placenta, lung, liver, skeletal muscle and pancreas and in numerous cancer cell lines. Isoform 3 and isoform 4 are weakly expressed in heart, placenta, lung, liver, skeletal muscle and pancreas. Isoform 4 is expressed in fetal tissues, such as heart, brain, thymus, lung, liver, skeletal kidney and spleen. Isoform 3 is weakly expressed in fetal tissues, such as liver and kidney.

It localises to the nucleus. The protein localises to the cytoplasm. It is found in the nucleus speckle. Its subcellular location is the mitochondrion. Its function is as follows. Acts as a transcriptional regulator in adaptive response to low oxygen tension. Acts as a regulator of hypoxia-inducible gene expression. Functions as an inhibitor of angiogenesis in hypoxic cells of the cornea. Plays a role in the development of the cardiorespiratory system. May also be involved in apoptosis. In terms of biological role, attenuates the ability of transcription factor HIF1A to bind to hypoxia-responsive elements (HRE) located within the enhancer/promoter of hypoxia-inducible target genes and hence inhibits HRE-driven transcriptional activation. Also inhibits hypoxia-inducible ARNT-mediated gene expression. Attenuates the ability of transcription factor HIF1A to bind to hypoxia-responsive elements (HRE) located within the enhancer/promoter of hypoxia-inducible target genes and hence inhibits HRE-driven transcriptional activation. Functionally, attenuates the ability of transcription factor HIF1A and EPAS1/HIF2A to bind to hypoxia-responsive elements (HRE) located within the enhancer/promoter of hypoxia-inducible target genes and hence inhibits HRE-driven transcriptional activation. May act as a tumor suppressor and inhibits malignant cell transformation. In Homo sapiens (Human), this protein is Hypoxia-inducible factor 3-alpha.